A 366-amino-acid polypeptide reads, in one-letter code: Protein U1 (366 aa).

The protein belongs to the herpesviridae US22 family.

The polypeptide is Protein U1 (U1) (Human herpesvirus 6A (strain Uganda-1102) (HHV-6 variant A)).